We begin with the raw amino-acid sequence, 535 residues long: 2-isopropylmalate synthase (535 aa).

The Pyruvate carboxyltransferase domain occupies Val-13–Pro-274. Mn(2+)-binding residues include Asp-22, His-213, His-215, and Asn-249. The tract at residues Gln-414–Ala-535 is regulatory domain.

The protein belongs to the alpha-IPM synthase/homocitrate synthase family. LeuA type 1 subfamily. In terms of assembly, homodimer. Mn(2+) serves as cofactor.

The protein localises to the cytoplasm. The enzyme catalyses 3-methyl-2-oxobutanoate + acetyl-CoA + H2O = (2S)-2-isopropylmalate + CoA + H(+). It participates in amino-acid biosynthesis; L-leucine biosynthesis; L-leucine from 3-methyl-2-oxobutanoate: step 1/4. In terms of biological role, catalyzes the condensation of the acetyl group of acetyl-CoA with 3-methyl-2-oxobutanoate (2-ketoisovalerate) to form 3-carboxy-3-hydroxy-4-methylpentanoate (2-isopropylmalate). The polypeptide is 2-isopropylmalate synthase (Thermosynechococcus vestitus (strain NIES-2133 / IAM M-273 / BP-1)).